Reading from the N-terminus, the 30-residue chain is Cycloviolacin-O2 (30 aa).

A cross-link (cyclopeptide (Gly-Asn)) is located at residues 1–30 (GIPCGESCVWIPCISSAIGCSCKSKVCYRN). 3 disulfide bridges follow: Cys-4/Cys-20, Cys-8/Cys-22, and Cys-13/Cys-27.

This is a cyclic peptide.

Probably participates in a plant defense mechanism. The protein is Cycloviolacin-O2 of Viola biflora (Yellow wood violet).